The following is a 122-amino-acid chain: Large ribosomal subunit protein uL14 (122 aa).

The protein belongs to the universal ribosomal protein uL14 family. In terms of assembly, part of the 50S ribosomal subunit. Forms a cluster with proteins L3 and L19. In the 70S ribosome, L14 and L19 interact and together make contacts with the 16S rRNA in bridges B5 and B8.

Its function is as follows. Binds to 23S rRNA. Forms part of two intersubunit bridges in the 70S ribosome. The protein is Large ribosomal subunit protein uL14 of Borrelia recurrentis (strain A1).